The following is a 214-amino-acid chain: Uracil phosphoribosyltransferase (214 aa).

Residues Arg81, Arg106, and 133 to 141 (DPMLATGNS) contribute to the 5-phospho-alpha-D-ribose 1-diphosphate site. Uracil contacts are provided by residues Ile196 and 201–203 (GDA). Asp202 is a 5-phospho-alpha-D-ribose 1-diphosphate binding site.

This sequence belongs to the UPRTase family. Requires Mg(2+) as cofactor.

It catalyses the reaction UMP + diphosphate = 5-phospho-alpha-D-ribose 1-diphosphate + uracil. Its pathway is pyrimidine metabolism; UMP biosynthesis via salvage pathway; UMP from uracil: step 1/1. With respect to regulation, allosterically activated by GTP. In terms of biological role, catalyzes the conversion of uracil and 5-phospho-alpha-D-ribose 1-diphosphate (PRPP) to UMP and diphosphate. This is Uracil phosphoribosyltransferase from Legionella pneumophila (strain Paris).